The sequence spans 236 residues: 3-oxoacyl-[acyl-carrier-protein] reductase (236 aa).

M1 carries the post-translational modification N-acetylmethionine. NADP(+)-binding positions include 11 to 14 (SRGI) and 34 to 35 (RN). Position 40 is an N6-acetyllysine (K40). Position 83 to 85 (83 to 85 (AAG)) interacts with NADP(+). Residue K96 is modified to N6-acetyllysine. A substrate-binding site is contributed by S134. Residues Y147, K151, and 180–182 (IHT) contribute to the NADP(+) site. The Proton acceptor role is filled by Y147. K194 bears the N6-acetyllysine mark.

This sequence belongs to the short-chain dehydrogenases/reductases (SDR) family. In terms of assembly, homotetramer (in vitro). Heterotetramer with HSD17B8; contains two molecules each of HSD17B8 and CBR4. Does not form homotetramers when HSD17B8 is coexpressed, only heterotetramers (in vitro).

The protein resides in the mitochondrion matrix. It catalyses the reaction a (3R)-hydroxyacyl-[ACP] + NADP(+) = a 3-oxoacyl-[ACP] + NADPH + H(+). The enzyme catalyses a quinone + NADPH + H(+) = a quinol + NADP(+). It functions in the pathway lipid metabolism; fatty acid biosynthesis. Component of the heterotetramer complex KAR (3-ketoacyl-[acyl carrier protein] reductase or 3-ketoacyl-[ACP] reductase) that forms part of the mitochondrial fatty acid synthase (mtFAS). Beta-subunit of the KAR heterotetramer complex, responsible for the 3-ketoacyl-ACP reductase activity of the mtFAS, reduces 3-oxoacyl-[ACP] to (3R)-hydroxyacyl-[ACP] in a NADPH-dependent manner with no chain length preference, thereby participating in mitochondrial fatty acid biosynthesis. The homotetramer has NADPH-dependent quinone reductase activity (in vitro), hence could play a role in protection against cytotoxicity of exogenous quinones. As a heterotetramer, it can also reduce 9,10-phenanthrenequinone, 1,4-benzoquinone and various other o-quinones and p-quinones (in vitro). This is 3-oxoacyl-[acyl-carrier-protein] reductase (Cbr4) from Rattus norvegicus (Rat).